The sequence spans 94 residues: Serine protease inhibitor Kazal-type 13 (94 aa).

Residues methionine 1–serine 23 form the signal peptide. One can recognise a Kazal-like domain in the interval arginine 33–aspartate 94. 3 disulfides stabilise this stretch: cysteine 39/cysteine 75, cysteine 53/cysteine 72, and cysteine 61/cysteine 93. N-linked (GlcNAc...) asparagine glycosylation occurs at asparagine 55.

Its subcellular location is the secreted. In terms of biological role, may be a serine protease inhibitor. Essential for sperm maturation and fertility. Inhibits sperm acrosome reaction, protecting sperm from premature reaction. In Homo sapiens (Human), this protein is Serine protease inhibitor Kazal-type 13 (SPINK13).